We begin with the raw amino-acid sequence, 227 residues long: Probable septum site-determining protein MinC (227 aa).

This sequence belongs to the MinC family. As to quaternary structure, interacts with MinD and FtsZ.

In terms of biological role, cell division inhibitor that blocks the formation of polar Z ring septums. Rapidly oscillates between the poles of the cell to destabilize FtsZ filaments that have formed before they mature into polar Z rings. Prevents FtsZ polymerization. The protein is Probable septum site-determining protein MinC of Shouchella clausii (strain KSM-K16) (Alkalihalobacillus clausii).